We begin with the raw amino-acid sequence, 92 residues long: Defensin-like protein 249 (92 aa).

The N-terminal stretch at 1–24 (MKLAAIFLASSVLLSLLPIHLSQG) is a signal peptide. Cystine bridges form between Cys34–Cys91, Cys45–Cys74, Cys53–Cys84, and Cys72–Cys86.

Belongs to the DEFL family.

It is found in the secreted. The polypeptide is Defensin-like protein 249 (SCRL7) (Arabidopsis thaliana (Mouse-ear cress)).